The chain runs to 122 residues: UPF0231 protein VV1_1657 (122 aa).

It belongs to the UPF0231 family.

In Vibrio vulnificus (strain CMCP6), this protein is UPF0231 protein VV1_1657.